Here is a 300-residue protein sequence, read N- to C-terminus: Protein SPEAR4 (300 aa).

Over residues 1–10 (MCSKTSSVSY) the composition is skewed to polar residues. A disordered region spans residues 1-45 (MCSKTSSVSYGNREDDDNYSSLCPKKQKHNNGGKKRVPRRGPGVA). Basic residues predominate over residues 25–39 (KKQKHNNGGKKRVPR). The SPL motif lies at 40-48 (RGPGVAELE). Residues 294-300 (IDLRLKL) carry the EAR motif.

Interacts with SPL and SPEAR2. Expressed in leaves.

Functionally, adapter-like transcriptional repressor recruiting TPL/TPR coepressors to inhibit TCP transcription factors. May be involved in leaf development. The chain is Protein SPEAR4 from Arabidopsis thaliana (Mouse-ear cress).